A 245-amino-acid chain; its full sequence is 1-(5-phosphoribosyl)-5-[(5-phosphoribosylamino)methylideneamino] imidazole-4-carboxamide isomerase (245 aa).

The active-site Proton acceptor is D10. The active-site Proton donor is D135.

The protein belongs to the HisA/HisF family.

The protein localises to the cytoplasm. The catalysed reaction is 1-(5-phospho-beta-D-ribosyl)-5-[(5-phospho-beta-D-ribosylamino)methylideneamino]imidazole-4-carboxamide = 5-[(5-phospho-1-deoxy-D-ribulos-1-ylimino)methylamino]-1-(5-phospho-beta-D-ribosyl)imidazole-4-carboxamide. Its pathway is amino-acid biosynthesis; L-histidine biosynthesis; L-histidine from 5-phospho-alpha-D-ribose 1-diphosphate: step 4/9. The protein is 1-(5-phosphoribosyl)-5-[(5-phosphoribosylamino)methylideneamino] imidazole-4-carboxamide isomerase of Methanosarcina barkeri (strain Fusaro / DSM 804).